Consider the following 177-residue polypeptide: Large ribosomal subunit protein uL6 (177 aa).

Belongs to the universal ribosomal protein uL6 family. Part of the 50S ribosomal subunit.

In terms of biological role, this protein binds to the 23S rRNA, and is important in its secondary structure. It is located near the subunit interface in the base of the L7/L12 stalk, and near the tRNA binding site of the peptidyltransferase center. The sequence is that of Large ribosomal subunit protein uL6 from Shewanella amazonensis (strain ATCC BAA-1098 / SB2B).